A 430-amino-acid chain; its full sequence is Adenylosuccinate synthetase (430 aa).

Residues 17 to 23 and 45 to 47 contribute to the GTP site; these read GDEGKGK and GHT. Asp18 (proton acceptor) is an active-site residue. The Mg(2+) site is built by Asp18 and Gly45. Residues 18-21, 43-46, Thr139, Arg153, Asn229, Thr244, and Arg308 each bind IMP; these read DEGK and NAGH. The active-site Proton donor is the His46. 304–310 is a binding site for substrate; sequence TVTGRRR. Residues Arg310, 336-338, and 418-420 contribute to the GTP site; these read KLD and GVG.

The protein belongs to the adenylosuccinate synthetase family. Homodimer. Mg(2+) serves as cofactor.

Its subcellular location is the cytoplasm. The enzyme catalyses IMP + L-aspartate + GTP = N(6)-(1,2-dicarboxyethyl)-AMP + GDP + phosphate + 2 H(+). It functions in the pathway purine metabolism; AMP biosynthesis via de novo pathway; AMP from IMP: step 1/2. Functionally, plays an important role in the de novo pathway and in the salvage pathway of purine nucleotide biosynthesis. Catalyzes the first committed step in the biosynthesis of AMP from IMP. The polypeptide is Adenylosuccinate synthetase (Cryptococcus neoformans var. neoformans serotype D (strain B-3501A) (Filobasidiella neoformans)).